The chain runs to 476 residues: MLVLLLHAVVLGLPSAWAVGACARACPAACACSTVERGCSVRCDRAGLLRVPAELPCEAVSIDLDRNGLRFLGERAFGTLPSLRRLSLRHNNLSFITPGAFKGLPRLAELRLAHNGDLRYLHARTFAALSRLRRLDLAACRLFSVPERLLAELPALRELAAFDNLFRRVPGALRGLANLTHAHLERGRIEAVASSSLQGLRRLRSLSLQANRVRAVHAGAFGDCGVLEHLLLNDNLLAELPADAFRGLRRLRTLNLGGNALDRVARAWFADLAELELLYLDRNSIAFVEEGAFQNLSGLLALHLNGNRLTVLAWVAFQPGFFLGRLFLFRNPWCCDCRLEWLRDWMEGSGRVTDVPCASPGSVAGLDLSQVTFGRSSDGLCVDPEELNLTTSSPGPSPEPAATTVSRFSSLLSKLLAPRVPVEEAANTTGGLANASLSDSLSSRGVGGAGRQPWFLLASCLLPSVAQHVVFGLQMD.

A signal peptide spans 1-18 (MLVLLLHAVVLGLPSAWA). LRR repeat units lie at residues 60-84 (VSID…PSLR), 85-108 (RLSL…PRLA), 110-133 (LRLA…SRLR), 134-157 (RLDL…PALR), 159-181 (LAAF…NLTH), 182-204 (AHLE…RRLR), 205-228 (SLSL…GVLE), 229-252 (HLLL…RRLR), 254-276 (LNLG…AELE), 277-300 (LLYL…SGLL), and 302-324 (LHLN…FFLG). N92 carries N-linked (GlcNAc...) asparagine glycosylation. An N-linked (GlcNAc...) asparagine glycan is attached at N178. An N-linked (GlcNAc...) asparagine glycan is attached at N295. The LRRCT domain maps to 336–387 (DCRLEWLRDWMEGSGRVTDVPCASPGSVAGLDLSQVTFGRSSDGLCVDPEEL). N-linked (GlcNAc...) asparagine glycans are attached at residues N388, N427, and N434.

The protein belongs to the small leucine-rich proteoglycan (SLRP) family. SLRP class IV subfamily. Expressed in kidney and retina. Also at low levels in brain, testis and muscle. Within the retina, expressed in the inner segment of photoreceptors, outer and inner nuclear layers and the ganglion cell layer.

The protein resides in the secreted. It is found in the extracellular space. The protein localises to the extracellular matrix. This is Nyctalopin (NYX) from Homo sapiens (Human).